Reading from the N-terminus, the 267-residue chain is Putative glycosyltransferase 63 (267 aa).

This sequence belongs to the glycosyltransferase group 1 family. Glycosyltransferase 4 subfamily.

The polypeptide is Putative glycosyltransferase 63 (SIFV0063) (Sulfolobus islandicus filamentous virus (isolate Iceland/Hveragerdi) (SIFV)).